Reading from the N-terminus, the 256-residue chain is MLRIADKTFDSHLFTGTGKFASSQLMVEAIRASGSQLVTLAMKRVDLRQHNDAILAPLIEAGVTLLPNTSGAKTAEEAIFAAQLAREALGTNWLKLEIHPDARWLLPDPIETLKAAEALVKQGFVVLPYCGADPVLCKRLEEVGCSAVMPLGAPIGSNQGLETKAMLEIIIQQSTVPVVVDAGIGVPSHAAQALEMGADAVLVNTAIAVADDPVMMATAFRLAVEAGVLARQAVPGSKSSQASATSPLTGFLEALA.

Catalysis depends on K95, which acts as the Schiff-base intermediate with DXP. 1-deoxy-D-xylulose 5-phosphate contacts are provided by residues G156, 182-183, and 204-205; these read AG and NT.

The protein belongs to the ThiG family. In terms of assembly, homotetramer. Forms heterodimers with either ThiH or ThiS.

The protein resides in the cytoplasm. The enzyme catalyses [ThiS sulfur-carrier protein]-C-terminal-Gly-aminoethanethioate + 2-iminoacetate + 1-deoxy-D-xylulose 5-phosphate = [ThiS sulfur-carrier protein]-C-terminal Gly-Gly + 2-[(2R,5Z)-2-carboxy-4-methylthiazol-5(2H)-ylidene]ethyl phosphate + 2 H2O + H(+). It functions in the pathway cofactor biosynthesis; thiamine diphosphate biosynthesis. In terms of biological role, catalyzes the rearrangement of 1-deoxy-D-xylulose 5-phosphate (DXP) to produce the thiazole phosphate moiety of thiamine. Sulfur is provided by the thiocarboxylate moiety of the carrier protein ThiS. In vitro, sulfur can be provided by H(2)S. The protein is Thiazole synthase of Salmonella paratyphi B (strain ATCC BAA-1250 / SPB7).